The sequence spans 784 residues: MKKRIPTLLATMIATALYSQQGLAADLASQCMLGVPSYDRPLVQGDTNDLPVTINANHAKGDYPDDAVFTGSVDIMQGNSRLQADEVQLHQKEAPGQPEPVRTVDALGNVHYDDNQVILKGPKGWANLNTKDTNVWEGDYQMVGRQGRGKADLMKQRGENRYTILDNGSFTSCLPGSDTWSVVGSEIIHDREEQVAEIWNARFKVGPVSIFYSPYLQLPVGDKRRSGFLIPNAKYTTTNYFEFYLPYYWNIAPNMDATITPHYMHRRGNIMWENEFRYLSQAGAGLMELDYLPSDKVYEDEHPNDDSSRRWLFYWNHSGVMDQVWRFNVDYTKVSDPSYFNDFDNKYGSSTDGYATQKFSVGYAVQNFNATVSTKQFQVFSEQNTSSYSAEPQLDVNYYQNDVGPFDTRIYGQAVHFVNTRDDMPEATRVHLEPTINLPLSNNWGSINTEAKLLATHYQQTNLDWYNSRNTTKLDESVNRVMPQFKVDGKMVFERDMEMLAPGYTQTLEPRAQYLYVPYRDQSDIYNYDSSLLQSDYSGLFRDRTYGGLDRIASANQVTTGVTSRIYDDAAVERFNISVGQIYYFTESRTGDDNITWENDDKTGSLVWAGDTYWRISERWGLRGGIQYDTRLDNVATSNSSIEYRRDEDRLVQLNYRYASPEYIQATLPKYYSTAEQYKNGISQVGAVASWPIADRWSIVGAYYYDTNANKQADSMLGVQYSSCCYAIRVGYERKLNGWDNDKQHAVYDNAIGFNIELRGLSSNYGLGTQEMLRSNILPYQNTL.

The N-terminal stretch at Met-1–Ala-24 is a signal peptide. Intrachain disulfides connect Cys-31–Cys-724 and Cys-173–Cys-725.

The protein belongs to the LptD family. As to quaternary structure, component of the lipopolysaccharide transport and assembly complex. Interacts with LptE and LptA. Post-translationally, contains two intramolecular disulfide bonds.

It is found in the cell outer membrane. Its function is as follows. Together with LptE, is involved in the assembly of lipopolysaccharide (LPS) at the surface of the outer membrane. The protein is LPS-assembly protein LptD of Escherichia coli O157:H7.